The following is a 487-amino-acid chain: WAS/WASL-interacting protein family member 1 (487 aa).

Over residues 1 to 14 the composition is skewed to pro residues; the sequence is MPVPPPPAPPPPPT. The segment at 1–487 is disordered; it reads MPVPPPPAPP…GAPPLPPIPR (487 aa). Polar residues predominate over residues 21–31; it reads EKPSLNKTEQA. A WH2 domain is found at 32–49; the sequence is GRNALLSDISKGKKLKKT. R33 bears the Asymmetric dimethylarginine mark. The tract at residues 45-48 is binds actin; the sequence is KLKK. A compositionally biased stretch (gly residues) spans 64-100; that stretch reads GAGGGYGGGSGGGGGGGSSGGGGNFGGGGPPGLGGLF. Residues R121 and R130 each carry the omega-N-methylarginine modification. Over residues 136–147 the composition is skewed to low complexity; the sequence is PFSSPSGPGRFP. S138 carries the post-translational modification Phosphoserine. 2 stretches are compositionally biased toward pro residues: residues 157–170 and 178–190; these read PPEP…PPRP and SLPP…PRPI. The residue at position 222 (S222) is a Phosphoserine. Pro residues-rich tracts occupy residues 234-243, 269-285, and 293-309; these read FPRPPLPPTP, VPPP…PSTP, and APPP…PLPP. Position 324 is a phosphoserine (S324). The span at 328–355 shows a compositional bias: pro residues; it reads PTPPLPSPGRSGPLPPPPTERPPPPVRD. The residue at position 329 (T329) is a Phosphothreonine. A Phosphoserine modification is found at S334. XRSGPXPPXP motif repeat units lie at residues 336–345, 358–367, and 394–403; these read GRSGPLPPPP and PRSGPRPPLP. Residues 397–418 show a composition bias toward pro residues; that stretch reads GPRPPLPPDRPGAGAPPPPPPS. The segment covering 419–428 has biased composition (polar residues); it reads TSVRNGFQDS. The span at 464–478 shows a compositional bias: basic and acidic residues; that stretch reads ARSESRSGSNRRERG.

Belongs to the verprolin family. Binds to WAS within the N-terminal region, at a site distinct from the CDC42-binding site. Binds profilin and actin. Interacts with DBNL. Binds to WASL. Interacts with DBNL. Interacts with FNBP1L (via the SH3 domain). As to expression, isoforms were differentially expressed. One isoform was ubiquitously expressed, another was muscle-specific and another was expressed in the liver, heart and testis.

It localises to the cytoplasmic vesicle. The protein resides in the cytoplasm. It is found in the cytoskeleton. Its subcellular location is the cell projection. The protein localises to the ruffle. Functionally, plays a role in the reorganization of the actin cytoskeleton. Contributes with NCK1 and GRB2 in the recruitment and activation of WASL. Plays a role in the formation of cell ruffles. May participate in regulating the subcellular localization of WASL, resulting in the disassembly of stress fibers in favor of filopodia formation. The protein is WAS/WASL-interacting protein family member 1 (Wipf1) of Rattus norvegicus (Rat).